Reading from the N-terminus, the 543-residue chain is Serendipity locus protein alpha (543 aa).

The protein localises to the cytoplasm. It is found in the cell membrane. Its function is as follows. Required for the cellularization of the syncytial blastoderm embryo. Involved in the localization of the actin filaments just prior to and during plasma membrane invagination. Sry-alpha together with nullo and bnk may provide auxiliary functions, by acting both to stabilize a large and dynamic microfilament structure and regulate its functions. The sequence is that of Serendipity locus protein alpha (Sry-alpha) from Drosophila subobscura (Fruit fly).